The sequence spans 404 residues: Probable eukaryotic initiation factor 4A (404 aa).

Residues 1 to 28 (MAQQGKVEPQDQDSFLDDQPGIRPIPSF) form a disordered region. The Q motif motif lies at 26 to 54 (PSFDDMPLHQNLLRGIYSHGFEKPSSIQQ). Residues 57 to 231 (IVPFTRGGDI…KKFMRDPTRI (175 aa)) form the Helicase ATP-binding domain. 70-77 (AQSGTGKT) is an ATP binding site. Positions 179–182 (DEAD) match the DEAD box motif. The Helicase C-terminal domain maps to 242–402 (GIKQYFIAVE…ELPVDFAAYL (161 aa)).

The protein belongs to the DEAD box helicase family. eIF4A subfamily. In terms of assembly, eIF4F is a multi-subunit complex, the composition of which varies with external and internal environmental conditions. It is composed of at least EIF4A, EIF4E and EIF4G.

The catalysed reaction is ATP + H2O = ADP + phosphate + H(+). ATP-dependent RNA helicase which is a subunit of the eIF4F complex involved in cap recognition and is required for mRNA binding to ribosome. In the current model of translation initiation, eIF4A unwinds RNA secondary structures in the 5'-UTR of mRNAs which is necessary to allow efficient binding of the small ribosomal subunit, and subsequent scanning for the initiator codon. The protein is Probable eukaryotic initiation factor 4A of Trypanosoma cruzi (strain CL Brener).